Here is a 213-residue protein sequence, read N- to C-terminus: Elongation factor 1-beta (213 aa).

Positions 67-80 are enriched in low complexity; the sequence is AGKAPAASGSAAAA. The interval 67–88 is disordered; the sequence is AGKAPAASGSAAAAAEEEDDED.

This sequence belongs to the EF-1-beta/EF-1-delta family. In terms of assembly, EF-1 is composed of 4 subunits: alpha, beta, delta, and gamma.

In terms of biological role, EF-1-beta and EF-1-delta stimulate the exchange of GDP bound to EF-1-alpha to GTP. This Candida albicans (strain WO-1) (Yeast) protein is Elongation factor 1-beta (EFB1).